The primary structure comprises 469 residues: Neuraminidase (469 aa).

At 1–9 (MNPNQKIMT) the chain is on the intravirion side. Residues 10–30 (IGSVSLIIAAVCFLMQIAILV) traverse the membrane as a helical segment. The interval 11-33 (GSVSLIIAAVCFLMQIAILVTTV) is involved in apical transport and lipid raft association. At 31-469 (TTVTLHFKQC…DGANINFMPI (439 aa)) the chain is on the virion surface side. Residues 36–88 (HFKQCECDSPSNNQVKPCEPIIIERNITEIVYLNNTTIEKETCPKLVEYRNWS) form a hypervariable stalk region region. Asparagine 61, asparagine 69, asparagine 70, and asparagine 86 each carry an N-linked (GlcNAc...) asparagine; by host glycan. Residues 91–469 (QCKITGFAPF…DGANINFMPI (379 aa)) form a head of neuraminidase region. Intrachain disulfides connect cysteine 92-cysteine 417, cysteine 124-cysteine 129, cysteine 183-cysteine 230, cysteine 232-cysteine 237, cysteine 278-cysteine 291, cysteine 280-cysteine 289, cysteine 318-cysteine 337, and cysteine 421-cysteine 447. A substrate-binding site is contributed by arginine 118. Residue asparagine 146 is glycosylated (N-linked (GlcNAc...) asparagine; by host). Catalysis depends on aspartate 151, which acts as the Proton donor/acceptor. Residue arginine 152 coordinates substrate. Asparagine 200 and asparagine 234 each carry an N-linked (GlcNAc...) asparagine; by host glycan. 276–277 (EE) lines the substrate pocket. Arginine 292 is a substrate binding site. Ca(2+) contacts are provided by aspartate 293, glycine 297, and aspartate 324. The segment at 323-344 (GDTPRNDDRSSKSNCRNPNNEK) is disordered. The segment covering 334–343 (KSNCRNPNNE) has biased composition (polar residues). A substrate-binding site is contributed by arginine 371. Asparagine 402 carries an N-linked (GlcNAc...) asparagine; by host glycan. Catalysis depends on tyrosine 406, which acts as the Nucleophile.

The protein belongs to the glycosyl hydrolase 34 family. As to quaternary structure, homotetramer. Ca(2+) serves as cofactor. Post-translationally, N-glycosylated.

Its subcellular location is the virion membrane. It is found in the host apical cell membrane. The enzyme catalyses Hydrolysis of alpha-(2-&gt;3)-, alpha-(2-&gt;6)-, alpha-(2-&gt;8)- glycosidic linkages of terminal sialic acid residues in oligosaccharides, glycoproteins, glycolipids, colominic acid and synthetic substrates.. With respect to regulation, inhibited by the neuraminidase inhibitors zanamivir (Relenza) and oseltamivir (Tamiflu). These drugs interfere with the release of progeny virus from infected cells and are effective against all influenza strains. Resistance to neuraminidase inhibitors is quite rare. Catalyzes the removal of terminal sialic acid residues from viral and cellular glycoconjugates. Cleaves off the terminal sialic acids on the glycosylated HA during virus budding to facilitate virus release. Additionally helps virus spread through the circulation by further removing sialic acids from the cell surface. These cleavages prevent self-aggregation and ensure the efficient spread of the progeny virus from cell to cell. Otherwise, infection would be limited to one round of replication. Described as a receptor-destroying enzyme because it cleaves a terminal sialic acid from the cellular receptors. May facilitate viral invasion of the upper airways by cleaving the sialic acid moieties on the mucin of the airway epithelial cells. Likely to plays a role in the budding process through its association with lipid rafts during intracellular transport. May additionally display a raft-association independent effect on budding. Plays a role in the determination of host range restriction on replication and virulence. Sialidase activity in late endosome/lysosome traffic seems to enhance virus replication. The protein is Neuraminidase of Influenza A virus (strain A/Swine/Hong Kong/3/1976 H3N2).